Consider the following 107-residue polypeptide: MLQKIADQRSYLTAAHNTLTALEKKLDNDYGEIEHNNNVIEYTVDGVGRYVVSRQPSVMELWVSSPITGPSKFGMVEKKFVEKKNGMEIMKYFEMEMERIKRMLGNR.

This sequence belongs to the frataxin family. As to quaternary structure, monomer.

It localises to the cytoplasm. Its function is as follows. Promotes the assembly and repair of iron-sulfur clusters by delivering Fe(2+) to proteins involved in these pathways. This Trachipleistophora hominis (Microsporidian parasite) protein is Frataxin (YFH1).